A 419-amino-acid polypeptide reads, in one-letter code: CinA-like protein (419 aa).

Belongs to the CinA family.

This is CinA-like protein from Picosynechococcus sp. (strain ATCC 27264 / PCC 7002 / PR-6) (Agmenellum quadruplicatum).